We begin with the raw amino-acid sequence, 125 residues long: Bublin coiled-coil protein (125 aa).

A coiled-coil region spans residues 46–95; that stretch reads IRKLDTQLDHLNDYMSKMEERLKAHNDRMMETLKQQKEEREKRRRSFHER. The interval 79 to 125 is disordered; it reads KQQKEEREKRRRSFHERMSQNQSEDEEFKKQMSSILKRVQSVKRTEK.

As to expression, expressed in many epithelial tissues, including the pharynx, intestine, excretory canal and hypodermis.

Its subcellular location is the cell junction. The protein localises to the cytoplasm. It localises to the cytoskeleton. In terms of biological role, dynamic component of the endotube in intestinal cells, interacts with intermediate filament and regulates intestinal lumen morphology. The sequence is that of Bublin coiled-coil protein from Caenorhabditis elegans.